We begin with the raw amino-acid sequence, 612 residues long: Membrane protein insertase YidC (612 aa).

Helical transmembrane passes span 4–24 (NTIIGFILIFWVLFGFAYLNH), 329–349 (LVPLGWSLFRAINKCLIIPIF), 358–378 (VNLGLAILILTLIIKIALFPL), 434–454 (ILLQMPFLIALFMFFPSAIGL), 484–504 (FLGNHISLFCLLMSLATILNT), 524–544 (LTMYFMPVVMFFFLNSYPAGL), and 546–566 (YYYLISTLITIMQTIIFRGLV).

The protein belongs to the OXA1/ALB3/YidC family. Type 1 subfamily. As to quaternary structure, interacts with the Sec translocase complex via SecD. Specifically interacts with transmembrane segments of nascent integral membrane proteins during membrane integration.

The protein localises to the cell inner membrane. Functionally, required for the insertion and/or proper folding and/or complex formation of integral membrane proteins into the membrane. Involved in integration of membrane proteins that insert both dependently and independently of the Sec translocase complex, as well as at least some lipoproteins. Aids folding of multispanning membrane proteins. This Azobacteroides pseudotrichonymphae genomovar. CFP2 protein is Membrane protein insertase YidC.